Reading from the N-terminus, the 302-residue chain is Ribosomal RNA small subunit methyltransferase H (302 aa).

Residues 32–34, Asp-51, Phe-78, Asp-97, and Gln-104 each bind S-adenosyl-L-methionine; that span reads GGH.

This sequence belongs to the methyltransferase superfamily. RsmH family.

It is found in the cytoplasm. The catalysed reaction is cytidine(1402) in 16S rRNA + S-adenosyl-L-methionine = N(4)-methylcytidine(1402) in 16S rRNA + S-adenosyl-L-homocysteine + H(+). Specifically methylates the N4 position of cytidine in position 1402 (C1402) of 16S rRNA. The sequence is that of Ribosomal RNA small subunit methyltransferase H from Nitratiruptor sp. (strain SB155-2).